A 620-amino-acid polypeptide reads, in one-letter code: uncharacterized protein (620 aa).

Belongs to the chlamydial CPn_0512/CT_425/TC_0708 family.

This is an uncharacterized protein from Chlamydia pneumoniae (Chlamydophila pneumoniae).